A 493-amino-acid polypeptide reads, in one-letter code: Gamma-aminobutyric acid receptor subunit alpha-3 (493 aa).

A signal peptide spans M1–G28. The interval T27–P54 is disordered. The Extracellular portion of the chain corresponds to Q29–G276. Residues E31–K42 show a composition bias toward basic and acidic residues. N-linked (GlcNAc...) asparagine glycosylation is present at N63. R119 contacts 4-aminobutanoate. N163 and N176 each carry an N-linked (GlcNAc...) asparagine glycan. T182 is a binding site for 4-aminobutanoate. A disulfide bond links C191 and C205. N228 carries N-linked (GlcNAc...) asparagine glycosylation. A run of 3 helical transmembrane segments spans residues Y277 to W298, V304 to A325, and M338 to V359. The Cytoplasmic segment spans residues N360–K458. S427 is modified (phosphoserine). A Phosphothreonine modification is found at T428. A phosphoserine mark is found at S434 and S443. The chain crosses the membrane as a helical span at residues I459–V480.

It belongs to the ligand-gated ion channel (TC 1.A.9) family. Gamma-aminobutyric acid receptor (TC 1.A.9.5) subfamily. GABRA3 sub-subfamily. As to quaternary structure, heteropentamer, formed by a combination of alpha (GABRA1-6), beta (GABRB1-3), gamma (GABRG1-3), delta (GABRD), epsilon (GABRE), rho (GABRR1-3), pi (GABRP) and theta (GABRQ) chains, each subunit exhibiting distinct physiological and pharmacological properties. Binds UBQLN1. Interacts with GPHN. As to expression, expressed in most brain regions. Expressed in lungs, in alveolar epithelium.

It is found in the postsynaptic cell membrane. The protein localises to the cell membrane. It catalyses the reaction chloride(in) = chloride(out). In terms of biological role, alpha subunit of the heteropentameric ligand-gated chloride channel gated by gamma-aminobutyric acid (GABA), a major inhibitory neurotransmitter in the brain. GABA-gated chloride channels, also named GABA(A) receptors (GABAAR), consist of five subunits arranged around a central pore and contain GABA active binding site(s) located at the alpha and beta subunit interface(s). When activated by GABA, GABAARs selectively allow the flow of chloride anions across the cell membrane down their electrochemical gradient. Chloride influx into the postsynaptic neuron following GABAAR opening decreases the neuron ability to generate a new action potential, thereby reducing nerve transmission. The chain is Gamma-aminobutyric acid receptor subunit alpha-3 from Rattus norvegicus (Rat).